Here is a 309-residue protein sequence, read N- to C-terminus: Olfactory receptor-like protein OLF4 (309 aa).

Over 1 to 25 the chain is Extracellular; the sequence is MELENDTRIPEFLLLGFSEEPKLQP. N5 is a glycosylation site (N-linked (GlcNAc...) asparagine). A helical transmembrane segment spans residues 26-49; the sequence is FLFGLFLSMYLVTILGNLLLILAV. At 50-57 the chain is on the cytoplasmic side; it reads SSDSHLHT. A helical transmembrane segment spans residues 58–79; sequence PMYFFLANLSFVDICFTCTTIP. Over 80–100 the chain is Extracellular; sequence KMLVNIQTQRKVITYESCIIQ. The chain crosses the membrane as a helical span at residues 101 to 120; the sequence is MYFFELFAGIDNFLLTVMAY. Over 121–139 the chain is Cytoplasmic; the sequence is DRYMAICYPLHYMVIMNPQ. Residues 140–158 form a helical membrane-spanning segment; that stretch reads LCSLLLLVSWIMSALHSLL. The Extracellular segment spans residues 159–196; that stretch reads QTLMVLRLSFCTHFQIPHFFCELNQMIQLACSDTFLNN. A helical membrane pass occupies residues 197 to 219; that stretch reads MMLYFAAILLGVAPLVGVLYSYF. Residues 220–236 lie on the Cytoplasmic side of the membrane; sequence KIVSSIRGISSAHSKYK. The chain crosses the membrane as a helical span at residues 237–260; that stretch reads AFSTCASHLSVVSLFYCTSLGVYL. Over 261–272 the chain is Extracellular; the sequence is SSAAPQSTHTSS. A helical transmembrane segment spans residues 273 to 292; the sequence is VASVMYTVVTPMLNPFIYSL. The Cytoplasmic portion of the chain corresponds to 293-309; sequence RNKDIKGALNVFFRGKP.

This sequence belongs to the G-protein coupled receptor 1 family.

It is found in the cell membrane. Its function is as follows. Putative odorant or sperm cell receptor. This chain is Olfactory receptor-like protein OLF4, found in Canis lupus familiaris (Dog).